The chain runs to 537 residues: Putative cysteine ligase BshC (537 aa).

Positions 422-450 form a coiled coil; it reads IEKVEGMIEQQRRLNQDLLDEVAGNQNNI.

The protein belongs to the BshC family.

Involved in bacillithiol (BSH) biosynthesis. May catalyze the last step of the pathway, the addition of cysteine to glucosamine malate (GlcN-Mal) to generate BSH. The polypeptide is Putative cysteine ligase BshC (Staphylococcus aureus (strain bovine RF122 / ET3-1)).